Reading from the N-terminus, the 275-residue chain is WIMGHMVNAIEQVDEFLDLGANAIEFDVDFDDDGVAKYTHHRIPCDCGRLCTKYAVFTEYLDYVRQVTTPGDPKFRKELVLHALDLKLQRISSEKAYAAGVDVATKLLDHYWMRGWNGGRAYILLNIPLVEDYEFIRAFKDTLRKEGHEQYNAKVGINFTGNEDLDEIREVLEKLGEDEHIWQADGITSCFPRGTERLKKALEKRDTPGYKYIPKVYAWTLVRSSIMRRSLRLGVDGVMSNYPDSVVKVLKEKEFSDKFRLATYADNPWEKFTPI.

Residue His5 is part of the active site. The Mg(2+) site is built by Glu25 and Asp27. The Nucleophile role is filled by His41. 2 disulfide bridges follow: Cys45-Cys51 and Cys47-Cys190. Position 85 (Asp85) interacts with Mg(2+).

The protein belongs to the arthropod phospholipase D family. Class II subfamily. Requires Mg(2+) as cofactor. Expressed by the venom gland.

The protein localises to the secreted. The enzyme catalyses an N-(acyl)-sphingosylphosphocholine = an N-(acyl)-sphingosyl-1,3-cyclic phosphate + choline. It carries out the reaction an N-(acyl)-sphingosylphosphoethanolamine = an N-(acyl)-sphingosyl-1,3-cyclic phosphate + ethanolamine. It catalyses the reaction a 1-acyl-sn-glycero-3-phosphocholine = a 1-acyl-sn-glycero-2,3-cyclic phosphate + choline. The catalysed reaction is a 1-acyl-sn-glycero-3-phosphoethanolamine = a 1-acyl-sn-glycero-2,3-cyclic phosphate + ethanolamine. Functionally, dermonecrotic toxins cleave the phosphodiester linkage between the phosphate and headgroup of certain phospholipids (sphingolipid and lysolipid substrates), forming an alcohol (often choline) and a cyclic phosphate. This toxin acts on sphingomyelin (SM). It may also act on ceramide phosphoethanolamine (CPE), lysophosphatidylcholine (LPC) and lysophosphatidylethanolamine (LPE), but not on lysophosphatidylserine (LPS), and lysophosphatidylglycerol (LPG). It acts by transphosphatidylation, releasing exclusively cyclic phosphate products as second products. Induces dermonecrosis, hemolysis, increased vascular permeability, edema, inflammatory response, and platelet aggregation. This is Dermonecrotic toxin SpeSicTox-betaIIA3ii from Sicarius peruensis (Six-eyed sand spider).